Consider the following 367-residue polypeptide: Tubulin-like protein CetZ (367 aa).

GTP is bound by residues 11–15, S111, 115–117, E148, N176, and N194; these read QCGNR and GTG.

It belongs to the CetZ family.

It localises to the cytoplasm. Its function is as follows. Involved in cell shape control. This is Tubulin-like protein CetZ from Methanothrix thermoacetophila (strain DSM 6194 / JCM 14653 / NBRC 101360 / PT) (Methanosaeta thermophila).